Consider the following 725-residue polypeptide: 1,4-alpha-glucan branching enzyme GlgB (725 aa).

The Nucleophile role is filled by aspartate 406. Glutamate 459 functions as the Proton donor in the catalytic mechanism.

This sequence belongs to the glycosyl hydrolase 13 family. GlgB subfamily. In terms of assembly, monomer.

The catalysed reaction is Transfers a segment of a (1-&gt;4)-alpha-D-glucan chain to a primary hydroxy group in a similar glucan chain.. The protein operates within glycan biosynthesis; glycogen biosynthesis. In terms of biological role, catalyzes the formation of the alpha-1,6-glucosidic linkages in glycogen by scission of a 1,4-alpha-linked oligosaccharide from growing alpha-1,4-glucan chains and the subsequent attachment of the oligosaccharide to the alpha-1,6 position. The polypeptide is 1,4-alpha-glucan branching enzyme GlgB (Methylobacillus flagellatus (strain ATCC 51484 / DSM 6875 / VKM B-1610 / KT)).